The chain runs to 263 residues: 4-hydroxy-tetrahydrodipicolinate reductase (263 aa).

NAD(+) is bound by residues 7–12 (GASGRM) and aspartate 33. Arginine 34 contributes to the NADP(+) binding site. NAD(+)-binding positions include 96–98 (GTT) and 120–123 (APNM). The Proton donor/acceptor role is filled by histidine 153. Histidine 154 contacts (S)-2,3,4,5-tetrahydrodipicolinate. Lysine 157 serves as the catalytic Proton donor. 163 to 164 (GT) serves as a coordination point for (S)-2,3,4,5-tetrahydrodipicolinate.

Belongs to the DapB family.

It is found in the cytoplasm. It catalyses the reaction (S)-2,3,4,5-tetrahydrodipicolinate + NAD(+) + H2O = (2S,4S)-4-hydroxy-2,3,4,5-tetrahydrodipicolinate + NADH + H(+). The enzyme catalyses (S)-2,3,4,5-tetrahydrodipicolinate + NADP(+) + H2O = (2S,4S)-4-hydroxy-2,3,4,5-tetrahydrodipicolinate + NADPH + H(+). Its pathway is amino-acid biosynthesis; L-lysine biosynthesis via DAP pathway; (S)-tetrahydrodipicolinate from L-aspartate: step 4/4. Functionally, catalyzes the conversion of 4-hydroxy-tetrahydrodipicolinate (HTPA) to tetrahydrodipicolinate. In Ralstonia nicotianae (strain ATCC BAA-1114 / GMI1000) (Ralstonia solanacearum), this protein is 4-hydroxy-tetrahydrodipicolinate reductase.